A 591-amino-acid polypeptide reads, in one-letter code: Aspartate--tRNA ligase (591 aa).

E172 lines the L-aspartate pocket. The interval 196–199 is aspartate; the sequence is QLFK. R218 lines the L-aspartate pocket. Residues 218–220 and Q227 contribute to the ATP site; that span reads RDE. L-aspartate is bound at residue H449. Residue E483 participates in ATP binding. Residue R490 coordinates L-aspartate. 535 to 538 contacts ATP; it reads GLDR.

Belongs to the class-II aminoacyl-tRNA synthetase family. Type 1 subfamily. As to quaternary structure, homodimer.

It localises to the cytoplasm. It carries out the reaction tRNA(Asp) + L-aspartate + ATP = L-aspartyl-tRNA(Asp) + AMP + diphosphate. Its function is as follows. Catalyzes the attachment of L-aspartate to tRNA(Asp) in a two-step reaction: L-aspartate is first activated by ATP to form Asp-AMP and then transferred to the acceptor end of tRNA(Asp). The polypeptide is Aspartate--tRNA ligase (Actinobacillus pleuropneumoniae serotype 5b (strain L20)).